The chain runs to 414 residues: Protein HIM1 (414 aa).

In terms of biological role, may participate in the control of processing of mutational intermediates appearing during error-prone bypass of DNA damage. The chain is Protein HIM1 (HIM1) from Saccharomyces cerevisiae (strain ATCC 204508 / S288c) (Baker's yeast).